Here is a 498-residue protein sequence, read N- to C-terminus: ATP synthase subunit beta, chloroplastic (498 aa).

172–179 (GGAGVGKT) lines the ATP pocket.

It belongs to the ATPase alpha/beta chains family. F-type ATPases have 2 components, CF(1) - the catalytic core - and CF(0) - the membrane proton channel. CF(1) has five subunits: alpha(3), beta(3), gamma(1), delta(1), epsilon(1). CF(0) has four main subunits: a(1), b(1), b'(1) and c(9-12).

The protein localises to the plastid. It is found in the chloroplast thylakoid membrane. It catalyses the reaction ATP + H2O + 4 H(+)(in) = ADP + phosphate + 5 H(+)(out). Functionally, produces ATP from ADP in the presence of a proton gradient across the membrane. The catalytic sites are hosted primarily by the beta subunits. The polypeptide is ATP synthase subunit beta, chloroplastic (Schisandra sphenanthera (Southern magnolia vine)).